We begin with the raw amino-acid sequence, 126 residues long: NADPH-dependent 7-cyano-7-deazaguanine reductase (126 aa).

C40 (thioimide intermediate) is an active-site residue. The active-site Proton donor is D47. Residues 62-64 (IEL) and 81-82 (HE) contribute to the substrate site.

The protein belongs to the GTP cyclohydrolase I family. QueF type 1 subfamily.

It localises to the cytoplasm. It catalyses the reaction 7-aminomethyl-7-carbaguanine + 2 NADP(+) = 7-cyano-7-deazaguanine + 2 NADPH + 3 H(+). It participates in tRNA modification; tRNA-queuosine biosynthesis. Catalyzes the NADPH-dependent reduction of 7-cyano-7-deazaguanine (preQ0) to 7-aminomethyl-7-deazaguanine (preQ1). The chain is NADPH-dependent 7-cyano-7-deazaguanine reductase from Campylobacter jejuni subsp. doylei (strain ATCC BAA-1458 / RM4099 / 269.97).